The sequence spans 1252 residues: ABC transporter B family member 19 (1252 aa).

Asn-5 carries an N-linked (GlcNAc...) asparagine glycan. The ABC transmembrane type-1 1 domain occupies 41 to 330; that stretch reads MFVGSLGAIV…SFSNLGAFSK (290 aa). Transmembrane regions (helical) follow at residues 42–62 and 88–108; these read FVGSLGAIVHGSSMPVFFLLF and LYFVYLGLVVCFSSYAEIACW. Position 136 (Asp-136) interacts with ATP. Helical transmembrane passes span 163–183, 187–207, 274–294, and 308–328; these read VGNFIHYLSTFLAGLVVGFVS, LALLSVAVIPGIAFAGGLYAY, CTYGIACMSWALVFWYAGVFI, and IFSAIVGGMSLGQSFSNLGAF. Brassinolide is bound by residues Tyr-276 and Trp-283. The region spanning 365-601 is the ABC transporter 1 domain; that stretch reads IEFKDVTFSY…SGAYASLIRF (237 aa). 7 residues coordinate ATP: Tyr-374, Ser-376, Gly-405, Lys-406, Ser-407, Thr-408, and Glu-529. N-linked (GlcNAc...) asparagine glycosylation is present at Asn-641. One can recognise an ABC transmembrane type-1 2 domain in the interval 687 to 975; it reads SIMGAVGSIL…TVSLAPEIIR (289 aa). The next 2 membrane-spanning stretches (helical) occupy residues 688 to 708 and 732 to 752; these read IMGAVGSILSGFIGPTFAIVM and FIYIGAGLYAVGAYLIQHYFF. The N-linked (GlcNAc...) asparagine glycan is linked to Asn-758. Asp-780 provides a ligand contact to ATP. N-linked (GlcNAc...) asparagine glycans are attached at residues Asn-785 and Asn-814. The next 3 membrane-spanning stretches (helical) occupy residues 822 to 842, 914 to 934, and 949 to 969; these read FIVAFIVEWRVSLLILGTFPL, GFLFGLSQLALYGSEALILWY, and VIKVFVVLVITANSVAETVSL. An interaction with FKBP42/TWD1 region spans residues 965–1252; it reads ETVSLAPEII…RLLQLQTHRI (288 aa). The ABC transporter 2 domain maps to 1010–1246; it reads IEFRHVDFAY…PEGAYSRLLQ (237 aa). The ATP site is built by Tyr-1019, Ser-1021, Arg-1022, Lys-1051, Ser-1052, and Ser-1053.

It belongs to the ABC transporter superfamily. ABCB family. Multidrug resistance exporter (TC 3.A.1.201) subfamily. In terms of assembly, interacts with 1-naphthylphthalamic acid (NPA), and FKBP42/TWD1. In terms of processing, phosphorylated by PHOT1 in phototropic seedlings, to modulates auxin export and distribution and regulates leaf and petiole curling. Ubiquitous, mostly in shoot meristems. Present in the majority of stem cells, predominantly in a non-polar manner. Accumulates in seedlings roots and hypocotyls, and in roots apices and inflorescences.

It localises to the cell membrane. It carries out the reaction (indol-3-yl)acetate(in) + ATP + H2O = (indol-3-yl)acetate(out) + ADP + phosphate + H(+). The catalysed reaction is brassinolide(in) + ATP + H2O = brassinolide(out) + ADP + phosphate + H(+). The enzyme catalyses 24-epi-brassinolide(in) + ATP + H2O = 24-epi-brassinolide(out) + ADP + phosphate + H(+). It catalyses the reaction 24-epi-castasterone(in) + ATP + H2O = 24-epi-castasterone(out) + ADP + phosphate + H(+). It carries out the reaction castasterone(in) + ATP + H2O = castasterone(out) + ADP + phosphate + H(+). Its activity is regulated as follows. Transport capacity is stimulated by the chaperone protein FKBP42/TWD1. ATPase activity is specifically activated by bioactive brassinosteroids in a dose-dependent manner, including brassinolide (BL), 24-epiBL and 24-epicastasterone (24-epiCS). Inhibited by vanadate. Functionally, brassinosteroid exporter that, in conjunction with ABCB1, supports the accumulation of exogenous brassinosteroids (BR) in the apoplast, thus promoting BR signaling initiation involving the specific receptor BRI1 and required for plant growth and stress responses. Mediates the transport of castasterone (CSA) and brassinolide (BL) across the plasma membrane. Auxin efflux transporter that acts as a negative regulator of light signaling to promote hypocotyl elongation by mediating leaf tip to petiole auxin flux. Required for the regulation of leaf position and morphology during PHOT1-mediated blue light responses involving auxin distribution, especially in low light fluence. Together with ABCB1 and in a FKBP42/TWD1-dependent manner, supports seed development by promoting stamen elongation and, to a lesser extent, anther dehiscence and pollen maturation, probably as auxin transporters. Contributes to the connective auxin transport (CAT) that ensures communication across the shoot system, including auxin loading at axillary bud apices to influence strigolactone-mediated bud outgrowth responses and shoot branching control. Mediates the accumulation of chlorophyll and anthocyanin, as well as the expression of genes in response to light. Participates in auxin efflux and thus regulates the polar auxin basipetal transport (from auxin-producing leaves to auxin-sensitive tissues, and from root tips to root elongating zone). Involved in diverse auxin-mediated responses including gravitropism, phototropism and lateral root formation. Required for the regulation of organ bending, such as gravitropic root bending. The chain is ABC transporter B family member 19 from Arabidopsis thaliana (Mouse-ear cress).